A 268-amino-acid polypeptide reads, in one-letter code: MIKVKKKFGQNFLQDENIKNQIIQAIPNDVKRIVEIGPGLGDLTQKLVKLDSMIDCFEIDSELYTILLDKFRSELDSGKLNIINSDALNAWDKLSASEYFLVANLPYYVATNMILKAIDDKNCKGLVVMIQREVAIKFSSEAGDKEFSSLAILTWLKGKCELLFDVPSSAFNPPPKVISSVIRIIKDRDLSLNLKYDNFKNFLRVAFSAPRKTLLKNLSNLVQRDRLEIFFNTENLSHTIRPHELSVALYLKLFKEAENERRKQNPCG.

The S-adenosyl-L-methionine site is built by N11, L13, G37, E58, D86, and N104.

Belongs to the class I-like SAM-binding methyltransferase superfamily. rRNA adenine N(6)-methyltransferase family. RsmA subfamily.

It localises to the cytoplasm. The catalysed reaction is adenosine(1518)/adenosine(1519) in 16S rRNA + 4 S-adenosyl-L-methionine = N(6)-dimethyladenosine(1518)/N(6)-dimethyladenosine(1519) in 16S rRNA + 4 S-adenosyl-L-homocysteine + 4 H(+). Its function is as follows. Specifically dimethylates two adjacent adenosines (A1518 and A1519) in the loop of a conserved hairpin near the 3'-end of 16S rRNA in the 30S particle. May play a critical role in biogenesis of 30S subunits. The protein is Ribosomal RNA small subunit methyltransferase A of Campylobacter fetus subsp. fetus (strain 82-40).